The sequence spans 407 residues: Ribonuclease Z (407 aa).

The segment at 1–308 (MEITFLGTSS…QDFLHYAIPR (308 aa)) is ribonuclease Z. H62, H64, D66, H67, H139, D210, and H268 together coordinate Zn(2+). The active-site Proton acceptor is D66. The tract at residues 309-407 (DGQICAEMPP…VDWSALNVLF (99 aa)) is unknown.

It belongs to the RNase Z family. Homodimer. The cofactor is Zn(2+).

The catalysed reaction is Endonucleolytic cleavage of RNA, removing extra 3' nucleotides from tRNA precursor, generating 3' termini of tRNAs. A 3'-hydroxy group is left at the tRNA terminus and a 5'-phosphoryl group is left at the trailer molecule.. Zinc phosphodiesterase, which displays some tRNA 3'-processing endonuclease activity. Probably involved in tRNA maturation, by removing a 3'-trailer from precursor tRNA. This chain is Ribonuclease Z (rnz), found in Thermosynechococcus vestitus (strain NIES-2133 / IAM M-273 / BP-1).